The following is a 676-amino-acid chain: Solute carrier family 26 member 10 (676 aa).

The segment at 1–24 (MSGPLASGTCSDPEEVSDLKSPLS) is disordered. The next 11 helical transmembrane spans lie at 101–121 (AVAG…FALL), 124–144 (VPPV…SLLG), 149–165 (LSTG…GSVV), 190–210 (VGAA…MFVL), 226–246 (ALTS…LLGL), 267–287 (ALSQ…VLLV), 300–320 (LLTP…LCFT), 353–373 (ILAD…SLAS), 398–418 (ISSL…SLLV), 426–446 (LAGL…RPFF), and 487–507 (IVTW…VGVV). Positions 539 to 660 (ESRKLLQVPG…VSVQDAAAHA (122 aa)) constitute an STAS domain.

This sequence belongs to the SLC26A/SulP transporter (TC 2.A.53) family.

It is found in the membrane. Chloride/bicarbonate exchanger. In Mus musculus (Mouse), this protein is Solute carrier family 26 member 10 (Slc26a10).